Reading from the N-terminus, the 598-residue chain is Protein unc-93 homolog B1 (598 aa).

A disordered region spans residues 1 to 36; sequence MEVEPPLYPVAGAAGPQGDEDRHGVPDGPEAPLDEL. A run of 5 helical transmembrane segments spans residues 64 to 84, 110 to 130, 132 to 152, 160 to 180, and 223 to 243; these read VLAASTGVTLTYGVYLGLLQM, KMLMGINVTPIAALLYTPVLI, FFGTKWMMFLAVGIYALFVST, TLVPSAVALGMAIVPLWASMG, and IFYSFFHLSFACAQLPMIYFL. Residues asparagine 251 and asparagine 272 are each glycosylated (N-linked (GlcNAc...) asparagine). 5 helical membrane passes run 285 to 305, 343 to 363, 378 to 398, 403 to 423, and 428 to 448; these read LIVVESVLMAVAFLAMLMVLG, LVPFFIYSGFEVLFACTGFAL, LLIAYSLGASASSVLGLLGLW, VPLVAGAGLHLLLTLSLFFWA, and VLQHSWIFYFVAALWGVGSAL. Residue asparagine 449 is glycosylated (N-linked (GlcNAc...) asparagine). 2 helical membrane-spanning segments follow: residues 469–489 and 495–515; these read FIFTIYHWWQAVAIFVVYLGS and AKLAVLLVTLVAAAASYLWME. Positions 524–598 are disordered; that stretch reads PRQPRIPKPQ…ALGGDGPEEQ (75 aa). A compositionally biased stretch (acidic residues) spans 544–554; sequence EDNSDESDMEG. Phosphoserine occurs at positions 547 and 550.

The protein belongs to the unc-93 family. In terms of assembly, interacts with TLR3, TLR5, TLR7, TLR8, TLR9 and TLR13 (probably via transmembrane domain). N-glycosylated.

It is found in the endoplasmic reticulum membrane. The protein localises to the endosome. The protein resides in the lysosome. It localises to the cytoplasmic vesicle. Its subcellular location is the phagosome. Functionally, plays an important role in innate and adaptive immunity by regulating nucleotide-sensing Toll-like receptor (TLR) signaling. Required for the transport of a subset of TLRs (including TLR3, TLR7 and TLR9) from the endoplasmic reticulum to endolysosomes where they can engage pathogen nucleotides and activate signaling cascades. May play a role in autoreactive B-cells removal. The sequence is that of Protein unc-93 homolog B1 from Mus musculus (Mouse).